Reading from the N-terminus, the 1039-residue chain is Integrin alpha-IIb (1039 aa).

The N-terminal stretch at 1 to 31 (MARALCPLQALWLLEWVLLLLGPCAAPPAWA) is a signal peptide. Residues 32–993 (LNLDPVQLTF…TQLLRALEER (962 aa)) lie on the Extracellular side of the membrane. 7 FG-GAP repeats span residues 35 to 96 (DPVQ…GGQC), 110 to 173 (VGSQ…RRAE), 187 to 238 (VEND…FSSY), 251 to 305 (SLSF…DSYY), 306 to 371 (QRLH…PHAL), 373 to 432 (APSL…GLRS), and 435 to 496 (SQVL…VQDS). N46 is a glycosylation site (N-linked (GlcNAc...) asparagine). 3 disulfides stabilise this stretch: C87–C96, C138–C161, and C177–C198. Positions 274, 276, and 278 each coordinate Ca(2+). A glycan (N-linked (GlcNAc...) asparagine) is linked at N280. Ca(2+)-binding residues include T281, E283, D328, N330, D332, R334, D336, D396, D398, D400, Y402, D404, D457, D459, N461, Y463, and D465. Intrachain disulfides connect C504–C515 and C521–C576. A glycan (N-linked (GlcNAc...) asparagine) is linked at N601. Cystine bridges form between C633–C639, C705–C718, C857–C921, and C911–C916. N711 carries an N-linked (GlcNAc...) asparagine glycan. An O-linked (GalNAc...) serine; in variant S-874 glycan is attached at I874. S878 carries O-linked (GalNAc...) serine glycosylation. Q891 bears the Pyrrolidone carboxylic acid; in light chain form 1 mark. N962 carries N-linked (GlcNAc...) asparagine glycosylation. A helical transmembrane segment spans residues 994-1019 (AIPIWWVLVGVLGGLLLLTILVLAMW). Residues 1020–1039 (KVGFFKRNRPPLEEDDEEGE) lie on the Cytoplasmic side of the membrane. The short motif at 1022–1026 (GFFKR) is the GFFKR motif element.

This sequence belongs to the integrin alpha chain family. In terms of assembly, heterodimer of an alpha and a beta subunit. The alpha subunit is composed of a heavy and a light chain linked by a disulfide bond. Alpha-IIb associates with beta-3. Directly interacts with RNF181. Interacts (via C-terminus cytoplasmic tail region) with CIB1; the interaction is direct and calcium-dependent. Interacts (via C-terminus cytoplasmic tail region) with CIB2, CIB3 and CIB4; the interactions are stabilized/increased in a calcium and magnesium-dependent manner. ITGA2B:ITGB3 interacts with PPIA/CYPA; the interaction is ROS and PPIase activity-dependent and is increased in the presence of thrombin. ITGA2B:ITGB3 interacts with SELP (via C-type lectin domain); the interaction mediates cell-cell interaction and adhesion. Cleaved by ELANE; the cleavage promotes activation of platelet fibrinogen receptor integrin alpha-IIb/beta-3. Isoform 1 and isoform 2 are expressed in platelets and megakaryocytes, but not in reticulocytes. Not detected in Jurkat, nor in U937 cell lines. Isoform 3 is expressed in prostate adenocarcinoma, as well as in several erythroleukemia, prostate adenocarcinoma and melanoma cell lines, including PC-3, DU-145, HEL, WM983A, WM983B and WM35. Not detected in platelets, nor in normal prostate (at protein level).

It localises to the membrane. Integrin alpha-IIb/beta-3 is a receptor for fibronectin, fibrinogen, plasminogen, prothrombin, thrombospondin and vitronectin. It recognizes the sequence R-G-D in a wide array of ligands. It recognizes the sequence H-H-L-G-G-G-A-K-Q-A-G-D-V in fibrinogen gamma chain. Following activation integrin alpha-IIb/beta-3 brings about platelet/platelet interaction through binding of soluble fibrinogen. This step leads to rapid platelet aggregation which physically plugs ruptured endothelial cell surface. The polypeptide is Integrin alpha-IIb (ITGA2B) (Homo sapiens (Human)).